Here is a 20-residue protein sequence, read N- to C-terminus: Cytochrome P450-RR1 (20 aa).

Belongs to the cytochrome P450 family. Heme is required as a cofactor.

P450-RRI catalyzes the O-dealkylation of 2-ethoxyphenol and 2-methoxyphenol to produce catechol. The cytochrome binds other ortho-substituted phenols, including 2-ethoxyphenol, 2-methylphenol and 2-chlorophenol. The chain is Cytochrome P450-RR1 from Rhodococcus rhodochrous.